A 148-amino-acid chain; its full sequence is Large ribosomal subunit protein bL9 (148 aa).

It belongs to the bacterial ribosomal protein bL9 family.

In terms of biological role, binds to the 23S rRNA. This is Large ribosomal subunit protein bL9 from Pseudomonas savastanoi pv. phaseolicola (strain 1448A / Race 6) (Pseudomonas syringae pv. phaseolicola (strain 1448A / Race 6)).